A 496-amino-acid polypeptide reads, in one-letter code: Cytochrome P450 monooxygenase cle4 (496 aa).

The helical transmembrane segment at 12 to 34 (FFTSPFPLTVGILSISLSGVLWY) threads the bilayer. Cys-435 lines the heme pocket.

The protein belongs to the cytochrome P450 family. Heme serves as cofactor.

The protein localises to the membrane. It functions in the pathway secondary metabolite biosynthesis; terpenoid biosynthesis. Its function is as follows. Cytochrome P450 monooxygenase; part of the cluster A that mediates the biosynthesis of chevalone E and its oxidized derivatives that possess a unique five-membered lactone ring and can synergistically enhance the cytotoxicity of doxorubicin (DOX) in breast cancer cells. Within the pathway, cle4 is involved in hydroxylation of the chavalone E scaffold at positions C-11 and C-12 and contributes with cle2 to the production of seven oxidation derivatives. The molecular scaffold is commonly biosynthesized by a series of enzymes including the non-reducing polyketide synthase (NR-PKS) cle1 that produces the alpha-pyrone triacetic acid lactone (TAL); The membrane-bound prenyltransferase cle5 that accepts TAL as its substrate to perform a C-3 geranylgeranylation reaction, in which the pathway-dedicated GGPS cle6 is required to provide GGPP, the other substrate of cle5; the FAD-dependent monooxygenase Cle3 that forms an (S)-epoxide ring at the terminal olefin of the geranylgeranyl group; and the terpene cyclase Cle7 that catalyzes the cyclization of the prenyl group that yields the pentacyclic pathway intermediate chevalone E. Chevalone E can derivatize into seven new oxidized analogs by the cytochrome P450 monooxygenases cle2 (acting at C-20) and cle4 (acting at C-11 and C-12). In Aspergillus versicolor, this protein is Cytochrome P450 monooxygenase cle4.